A 2353-amino-acid polypeptide reads, in one-letter code: C2 domain-containing protein 3 (2353 aa).

The tract at residues 1-27 is disordered; that stretch reads MKQRKGQGSGGSRGRKKRGLSDISPST. Residue Ser466 is modified to Phosphoserine. Disordered regions lie at residues 488–508 and 549–568; these read KVLE…RNRN and GVPP…AGPP. Basic residues predominate over residues 496–507; the sequence is KLKKRSAGKRNR. One can recognise a C2 1 domain in the interval 521 to 678; sequence DAQTMTLSVD…IQSELLSFSD (158 aa). Ser728 carries the post-translational modification Phosphoserine. C2 domains are found at residues 787–919, 985–1147, 1171–1339, and 1403–1533; these read SHNL…SRLL, QPTA…HRED, SSGL…TGWY, and EPAT…TLTV. Residues 1569–1591 form a disordered region; that stretch reads HELDSMDCSSHSESEQLPRRNDE. One can recognise a C2 6 domain in the interval 1617–1745; the sequence is TTAEVRLTQE…SGFQFVCGWY (129 aa). Positions 1822-1846 are disordered; that stretch reads SKELDFSSPGRSDTTRSQASRHEEH. The segment covering 1830–1839 has biased composition (polar residues); the sequence is PGRSDTTRSQ. Phosphoserine is present on Ser1891. Disordered stretches follow at residues 1972-2032, 2084-2118, 2130-2269, and 2301-2334; these read ALSS…NGGR, TSPW…PGPF, LSSP…QSLL, and PAAT…LNLP. Over residues 2007–2016 the composition is skewed to basic and acidic residues; sequence PLVRAPDKGT. A compositionally biased stretch (polar residues) spans 2084–2098; sequence TSPWSSVISDTSEVI. Ser2114 and Ser2132 each carry phosphoserine. Residues 2181–2198 are compositionally biased toward polar residues; that stretch reads SGAQQSSTFVGWSSPQTD. A compositionally biased stretch (basic and acidic residues) spans 2236-2253; it reads SRRENHKGPPIDSSDIRQ. Positions 2254 to 2267 are enriched in polar residues; sequence RQVTTGSETSTKQS.

As to quaternary structure, interacts with IFT88, BBS4 and PCM1. Interacts with OFD1; OFD1 may act as a negative regulator of C2CD3. Associates with the BBSome complex.

The protein resides in the cytoplasm. The protein localises to the cytoskeleton. It localises to the cilium basal body. It is found in the microtubule organizing center. Its subcellular location is the centrosome. The protein resides in the centriole. In terms of biological role, component of the centrioles that acts as a positive regulator of centriole elongation. Promotes assembly of centriolar distal appendage, a structure at the distal end of the mother centriole that acts as an anchor of the cilium, and is required for recruitment of centriolar distal appendages proteins CEP83, SCLT1, CEP89, FBF1 and CEP164. Not required for centriolar satellite integrity or RAB8 activation. Required for primary cilium formation. Required for sonic hedgehog/SHH signaling and for proteolytic processing of GLI3. This Homo sapiens (Human) protein is C2 domain-containing protein 3 (C2CD3).